The chain runs to 549 residues: Cell pattern formation-associated protein StuA (549 aa).

The region spanning 86–192 (RVTATLWEDE…HNIGALLYHP (107 aa)) is the HTH APSES-type domain. Positions 120 to 141 (GTKLLNVAGMTRGRRDGILKSE) form a DNA-binding region, H-T-H motif. 4 disordered regions span residues 205–227 (AERRKHEGLGGQRPPAPNALPSI), 246–288 (SLAN…DLHR), 332–466 (REED…DHLN), and 514–549 (ASTVAASPSYPSAPVYDTAARPPSAISAPRRQQSFG). Residues 246 to 266 (SLANGPQSLASTPQPLANGSQ) show a composition bias toward polar residues. Composition is skewed to basic and acidic residues over residues 278 to 288 (RGREEEEDLHR), 332 to 346 (REEDDEVHRSAHNAH), and 385 to 395 (RGRDEDDDHRS). Residues 516 to 545 (TVAASPSYPSAPVYDTAARPPSAISAPRRQ) are nuclear localization domain. Low complexity predominate over residues 532 to 549 (AARPPSAISAPRRQQSFG).

It belongs to the EFG1/PHD1/stuA family.

The protein resides in the nucleus. Transcription factor that regulates asexual reproduction. Binds the StuA-response elements (StRE) with the consensus sequence 5'-(A/T)CGCG(T/A)N(A/C)-3' at the promoters of target genes. In Gibberella moniliformis (strain M3125 / FGSC 7600) (Maize ear and stalk rot fungus), this protein is Cell pattern formation-associated protein StuA.